A 432-amino-acid chain; its full sequence is Adenylosuccinate synthetase (432 aa).

GTP is bound by residues 13–19 (GDEGKGK) and 41–43 (GHT). Aspartate 14 serves as the catalytic Proton acceptor. The Mg(2+) site is built by aspartate 14 and glycine 41. IMP is bound by residues 14–17 (DEGK), 39–42 (NAGH), threonine 130, arginine 144, glutamine 225, threonine 240, and arginine 304. Histidine 42 serves as the catalytic Proton donor. 300–306 (ATTGRRR) is a substrate binding site. GTP-binding positions include arginine 306, 332–334 (KLD), and 415–417 (STG).

It belongs to the adenylosuccinate synthetase family. Homodimer. The cofactor is Mg(2+).

It localises to the cytoplasm. The catalysed reaction is IMP + L-aspartate + GTP = N(6)-(1,2-dicarboxyethyl)-AMP + GDP + phosphate + 2 H(+). It functions in the pathway purine metabolism; AMP biosynthesis via de novo pathway; AMP from IMP: step 1/2. Functionally, plays an important role in the de novo pathway of purine nucleotide biosynthesis. Catalyzes the first committed step in the biosynthesis of AMP from IMP. In Salmonella heidelberg (strain SL476), this protein is Adenylosuccinate synthetase.